Here is a 252-residue protein sequence, read N- to C-terminus: Coenzyme F420:L-glutamate ligase (252 aa).

GTP is bound by residues 12 to 15, 44 to 45, and Lys-49; these read VPLE and HT. Asp-114 contacts a divalent metal cation. Asn-117 serves as a coordination point for GTP. Asp-155, Thr-156, and Gln-213 together coordinate a divalent metal cation. 211 to 218 is a binding site for GTP; that stretch reads MGQADEGT.

The protein belongs to the CofE family. In terms of assembly, homodimer. The cofactor is Mg(2+). Requires Mn(2+) as cofactor. K(+) is required as a cofactor.

It catalyses the reaction oxidized coenzyme F420-0 + GTP + L-glutamate = oxidized coenzyme F420-1 + GDP + phosphate + H(+). It carries out the reaction oxidized coenzyme F420-1 + GTP + L-glutamate = oxidized coenzyme F420-2 + GDP + phosphate + H(+). It participates in cofactor biosynthesis; coenzyme F420 biosynthesis. Catalyzes the GTP-dependent successive addition of two or more gamma-linked L-glutamates to the L-lactyl phosphodiester of 7,8-didemethyl-8-hydroxy-5-deazariboflavin (F420-0) to form coenzyme F420-0-glutamyl-glutamate (F420-2) or polyglutamated F420 derivatives. This is Coenzyme F420:L-glutamate ligase from Methanopyrus kandleri (strain AV19 / DSM 6324 / JCM 9639 / NBRC 100938).